The primary structure comprises 374 residues: Tryptophan--tRNA ligase (374 aa).

Positions 71–79 match the 'HIGH' region motif; sequence PSGRMHLGH. A 'KMSKS' region motif is present at residues 247–251; the sequence is KMSSS.

This sequence belongs to the class-I aminoacyl-tRNA synthetase family.

The protein localises to the cytoplasm. The catalysed reaction is tRNA(Trp) + L-tryptophan + ATP = L-tryptophyl-tRNA(Trp) + AMP + diphosphate + H(+). In Methanopyrus kandleri (strain AV19 / DSM 6324 / JCM 9639 / NBRC 100938), this protein is Tryptophan--tRNA ligase.